A 373-amino-acid chain; its full sequence is 3-isopropylmalate dehydrogenase (373 aa).

82–93 (GPKWGTGALRPE) is an NAD(+) binding site. Residues Arg100, Arg110, Arg139, and Asp231 each contribute to the substrate site. 3 residues coordinate Mg(2+): Asp231, Asp256, and Asp260. Residue 295–306 (GSAPDLPANKVN) participates in NAD(+) binding.

It belongs to the isocitrate and isopropylmalate dehydrogenases family. Homodimer. Mg(2+) is required as a cofactor. It depends on Mn(2+) as a cofactor.

The protein localises to the cytoplasm. The enzyme catalyses (2R,3S)-3-isopropylmalate + NAD(+) = 4-methyl-2-oxopentanoate + CO2 + NADH. The protein operates within amino-acid biosynthesis; L-leucine biosynthesis; L-leucine from 3-methyl-2-oxobutanoate: step 3/4. Functionally, catalyzes the oxidation of 3-carboxy-2-hydroxy-4-methylpentanoate (3-isopropylmalate) to 3-carboxy-4-methyl-2-oxopentanoate. The product decarboxylates to 4-methyl-2 oxopentanoate. This is 3-isopropylmalate dehydrogenase (LEU2) from Candida maltosa (Yeast).